A 646-amino-acid chain; its full sequence is Nucleoside triphosphatase I (646 aa).

The Helicase ATP-binding domain maps to 48–213 (FIGLKNLNSM…NNLIGLLRPN (166 aa)). 61-68 (WDTGMGKT) lines the ATP pocket. The short motif at 151–154 (DEVH) is the DEXH box element. The 164-residue stretch at 377 to 540 (YIEACRIILN…KINVVFDLLK (164 aa)) folds into the Helicase C-terminal domain. Residues 466–532 (DIIILDMPWN…DIIKDKQSKI (67 aa)) form a binding to the cap-specific mRNA (nucleoside-2'-O-)-methyltransferase region.

It belongs to the helicase family. NPH I subfamily. As to quaternary structure, monomer. Interacts (via C-terminus) with RAP94 (via N-terminus). Interacts with the cap-specific mRNA (nucleoside-2'-O-)-methyltransferase.

Its subcellular location is the virion. The enzyme catalyses a ribonucleoside 5'-triphosphate + H2O = a ribonucleoside 5'-diphosphate + phosphate + H(+). In terms of biological role, DNA-dependent ATPase required for providing the needed energy to achieve the termination of early transcripts. Acts in concert with the RAP94 subunit of the virion RNA polymerase and the capping enzyme/VTF to catalyze release of UUUUUNU-containing nascent RNA from the elongation complex. NPH-I must bind ssDNA in order to exhibit ATPase activity. This is Nucleoside triphosphatase I (NPH1) from Heliothis armigera entomopoxvirus (HaEPV).